The sequence spans 815 residues: Translation initiation factor IF-2 (815 aa).

A compositionally biased stretch (basic and acidic residues) spans 153-176; sequence VQEKEAEKKVEKLKTADKPKEGNK. The disordered stretch occupies residues 153–219; that stretch reads VQEKEAEKKV…THLSQKIQAE (67 aa). The span at 191–209 shows a compositional bias: basic residues; it reads KQLHVARHNPNRRLKKKDR. Residues 315–482 form the tr-type G domain; sequence ARPPIVTIMG…AISLTAEILE (168 aa). Residues 324-331 are G1; sequence GHVDHGKT. 324–331 serves as a coordination point for GTP; sequence GHVDHGKT. The G2 stretch occupies residues 349-353; that stretch reads GITQH. The tract at residues 370 to 373 is G3; it reads DTPG. Residues 370–374 and 424–427 contribute to the GTP site; these read DTPGH and NKID. A G4 region spans residues 424–427; the sequence is NKID. The tract at residues 460 to 462 is G5; it reads SAH.

It belongs to the TRAFAC class translation factor GTPase superfamily. Classic translation factor GTPase family. IF-2 subfamily.

It is found in the cytoplasm. Its function is as follows. One of the essential components for the initiation of protein synthesis. Protects formylmethionyl-tRNA from spontaneous hydrolysis and promotes its binding to the 30S ribosomal subunits. Also involved in the hydrolysis of GTP during the formation of the 70S ribosomal complex. The polypeptide is Translation initiation factor IF-2 (Vesicomyosocius okutanii subsp. Calyptogena okutanii (strain HA)).